Here is a 266-residue protein sequence, read N- to C-terminus: Protein crossbronx-like (266 aa).

A UBC core domain is found at 15 to 178 (KQGYHILAEY…VQEQAILSRN (164 aa)). Residues 226-266 (SEYLGHIDSSRQMDEEETNQLEKLHRGRIPEPQREEAEVSL) form a disordered region. Basic and acidic residues predominate over residues 245–266 (QLEKLHRGRIPEPQREEAEVSL).

This sequence belongs to the ubiquitin-conjugating enzyme family. FTS subfamily.

This Drosophila sechellia (Fruit fly) protein is Protein crossbronx-like.